The chain runs to 443 residues: Thymidine phosphorylase (443 aa).

It belongs to the thymidine/pyrimidine-nucleoside phosphorylase family. Homodimer.

It carries out the reaction thymidine + phosphate = 2-deoxy-alpha-D-ribose 1-phosphate + thymine. It functions in the pathway pyrimidine metabolism; dTMP biosynthesis via salvage pathway; dTMP from thymine: step 1/2. In terms of biological role, the enzymes which catalyze the reversible phosphorolysis of pyrimidine nucleosides are involved in the degradation of these compounds and in their utilization as carbon and energy sources, or in the rescue of pyrimidine bases for nucleotide synthesis. The protein is Thymidine phosphorylase of Shewanella denitrificans (strain OS217 / ATCC BAA-1090 / DSM 15013).